The sequence spans 956 residues: Netrin receptor UNC5D (956 aa).

An N-terminal signal peptide occupies residues 1–30; the sequence is MGTGAADRSRGARWWLPWLGLCFWAAGAEA. Residues 31-382 are Extracellular-facing; that stretch reads ARGADSGEVL…SRRGIENASD (352 aa). The region spanning 52–149 is the Ig-like domain; the sequence is PHFIEEPEDA…LGTSKSRKAS (98 aa). 9 disulfides stabilise this stretch: C73–C134, C85–C132, C178–C229, C262–C299, C266–C303, C277–C289, C318–C352, C322–C357, and C330–C342. Positions 89–91 are important for interaction with FLRT2; the sequence is WVH. N-linked (GlcNAc...) asparagine glycosylation is found at N115 and N226. The Ig-like C2-type domain maps to 164 to 242; the sequence is QGREVPIEGM…NIVAKRRSLS (79 aa). TSP type-1 domains lie at 250–304 and 306–358; these read NGGW…ALCP and DGSW…GLCI. Residues 383-403 traverse the membrane as a helical segment; that stretch reads IALYSGLGAAVVAVAVLVIGV. Residues 404–956 are Cytoplasmic-facing; that stretch reads TLYRRSHSDY…DFNYSRQNGL (553 aa). The ZU5 domain occupies 545–685; that stretch reads LRTTGVFGHL…FGTYALTGEP (141 aa). One can recognise a Death domain in the interval 862-939; it reads QRICATFDTP…RTHTKLSNIT (78 aa).

The protein belongs to the unc-5 family. In terms of assembly, interacts (via extracellular domain) with FLRT2 and FLRT3 (via extracellular domain); the interaction is direct. Has higher affinity for FLRT2. Identified in a complex with FLRT3 and ADGRL3; does not interact with ADGRL3 by itself. Proteolytically cleaved by caspases during apoptosis. The cleavage does not take place when the receptor is associated with netrin ligand. Its cleavage by caspases is required to induce apoptosis.

It is found in the cell membrane. Receptor for the netrin NTN4 that promotes neuronal cell survival. Plays a role in cell-cell adhesion and cell guidance. Receptor for netrin involved in cell migration. Plays a role in axon guidance by mediating axon repulsion of neuronal growth cones in the developing nervous system upon ligand binding. May play a role in apoptosis in response to DNA damage. It also acts as a dependence receptor required for apoptosis induction when not associated with netrin ligand. Mediates cell-cell adhesion via its interaction with FLRT3 on an adjacent cell. This Rattus norvegicus (Rat) protein is Netrin receptor UNC5D.